The primary structure comprises 2742 residues: Neurobeachin-like protein 2 (2742 aa).

Disordered stretches follow at residues alanine 1312–serine 1333 and leucine 1356–proline 1434. Pro residues predominate over residues threonine 1384–phenylalanine 1394. The span at glycine 1421 to threonine 1433 shows a compositional bias: polar residues. A Phosphothreonine modification is found at threonine 1855. One can recognise a BEACH-type PH domain in the interval glutamate 1903–leucine 2028. In terms of domain architecture, BEACH spans arginine 2041–arginine 2333. 7 WD repeats span residues leucine 2374 to proline 2412, lysine 2436 to arginine 2479, leucine 2482 to leucine 2519, lysine 2532 to valine 2570, alanine 2577 to leucine 2619, arginine 2627 to leucine 2662, and proline 2670 to glycine 2705. 2 positions are modified to phosphoserine: serine 2727 and serine 2730.

It belongs to the WD repeat neurobeachin family.

It localises to the endoplasmic reticulum. Probably involved in thrombopoiesis. Plays a role in the development or secretion of alpha-granules, that contain several growth factors important for platelet biogenesis. In Mus musculus (Mouse), this protein is Neurobeachin-like protein 2 (Nbeal2).